The primary structure comprises 115 residues: Migration and invasion enhancer 1 (115 aa).

At Ser2 the chain carries N-acetylserine. An intrachain disulfide couples Cys30 to Cys33. Cys112 carries the S-geranylgeranyl cysteine lipid modification. Residues 113-115 constitute a propeptide, removed in mature form; it reads VIL.

The protein belongs to the SelWTH family. In terms of assembly, interacts with GPX1. Isoprenylation facilitates association with the plasma membrane and enhances the migratory phenotype of cells by inducing increased filopodia formation. Widely expressed with highest levels in kidney followed by brain and testis.

Its subcellular location is the cytoplasm. The protein localises to the cytosol. It localises to the cell membrane. In terms of biological role, increases cell migration by inducing filopodia formation at the leading edge of migrating cells. Plays a role in regulation of apoptosis, possibly through control of CASP3. May be involved in a redox-related process. In Mus musculus (Mouse), this protein is Migration and invasion enhancer 1 (Mien1).